Here is a 90-residue protein sequence, read N- to C-terminus: U7-theraphotoxin-Hhn1i (90 aa).

Positions 1–19 are cleaved as a signal peptide; it reads MKTAIFTVVLALAVFAVLS. Positions 20 to 50 are excised as a propeptide; it reads FGWEANEKALSEEFTELIHEKEAASETEARE. Intrachain disulfides connect cysteine 51–cysteine 65, cysteine 58–cysteine 70, and cysteine 64–cysteine 81.

This sequence belongs to the neurotoxin 10 (Hwtx-1) family. 13 (Hntx-13) subfamily. Expressed by the venom gland.

Its subcellular location is the secreted. Functionally, ion channel inhibitor. In Cyriopagopus hainanus (Chinese bird spider), this protein is U7-theraphotoxin-Hhn1i.